A 101-amino-acid chain; its full sequence is Large ribosomal subunit protein uL23 (101 aa).

It belongs to the universal ribosomal protein uL23 family. As to quaternary structure, part of the 50S ribosomal subunit. Contacts protein L29, and trigger factor when it is bound to the ribosome.

Its function is as follows. One of the early assembly proteins it binds 23S rRNA. One of the proteins that surrounds the polypeptide exit tunnel on the outside of the ribosome. Forms the main docking site for trigger factor binding to the ribosome. The chain is Large ribosomal subunit protein uL23 from Corynebacterium jeikeium (strain K411).